We begin with the raw amino-acid sequence, 264 residues long: [LysW]-aminoadipate/[LysW]-glutamate kinase (264 aa).

Substrate is bound by residues 35–36, Arg62, and Asn167; that span reads GG.

It belongs to the acetylglutamate kinase family. LysZ subfamily.

The protein localises to the cytoplasm. It catalyses the reaction [amino-group carrier protein]-C-terminal-N-(1,4-dicarboxybutan-1-yl)-L-glutamine + ATP = [amino-group carrier protein]-C-terminal-N-(1-carboxy-5-phosphooxy-5-oxopentan-1-yl)-L-glutamine + ADP. The enzyme catalyses [amino-group carrier protein]-C-terminal-gamma-(L-glutamyl)-L-glutamate + ATP = [amino-group carrier protein]-C-terminal-gamma-(5-phospho-L-glutamyl)-L-glutamate + ADP. The protein operates within amino-acid biosynthesis; L-lysine biosynthesis via AAA pathway; L-lysine from L-alpha-aminoadipate (Thermus route): step 2/5. It functions in the pathway amino-acid biosynthesis; L-arginine biosynthesis. Functionally, involved in both the arginine and lysine biosynthetic pathways. Phosphorylates the LysW-bound precursors glutamate (for arginine biosynthesis), respectively alpha-aminoadipate (for lysine biosynthesis). The protein is [LysW]-aminoadipate/[LysW]-glutamate kinase of Saccharolobus islandicus (strain L.S.2.15 / Lassen #1) (Sulfolobus islandicus).